The primary structure comprises 117 residues: Large ribosomal subunit protein bL19 (117 aa).

Belongs to the bacterial ribosomal protein bL19 family.

Its function is as follows. This protein is located at the 30S-50S ribosomal subunit interface and may play a role in the structure and function of the aminoacyl-tRNA binding site. The polypeptide is Large ribosomal subunit protein bL19 (Bacteroides thetaiotaomicron (strain ATCC 29148 / DSM 2079 / JCM 5827 / CCUG 10774 / NCTC 10582 / VPI-5482 / E50)).